Consider the following 362-residue polypeptide: Stress response regulator protein 1 (362 aa).

2 disordered regions span residues 1-39 (MTRLTRPMVRSPISLPSTPSQLLHSASLSSSPSSPSLVQ) and 163-188 (TLKSTVSTSTSTSTSTSTGTNTETKT). The segment covering 19 to 39 (PSQLLHSASLSSSPSSPSLVQ) has biased composition (low complexity). In terms of domain architecture, Response regulatory spans 209-327 (KFLLVDDNLI…LDFMANVIDE (119 aa)). D260 carries the post-translational modification 4-aspartylphosphate.

In terms of biological role, required for stress adaptation, morphogenesis and virulence. The chain is Stress response regulator protein 1 (SRR1) from Lodderomyces elongisporus (strain ATCC 11503 / CBS 2605 / JCM 1781 / NBRC 1676 / NRRL YB-4239) (Yeast).